The chain runs to 1200 residues: Zinc finger protein 804A (1200 aa).

The segment at 57–81 adopts a C2H2-type zinc-finger fold; sequence FYCELCDKQYYKHQEFDNHINSYDH. Disordered regions lie at residues 252–280, 343–367, 582–687, 727–777, 799–828, and 874–949; these read STSH…PEAM, DGPV…RTSA, HWFH…NCGG, EDDG…SDES, QPKK…NYPM, and PYNP…TNPE. The span at 585–603 shows a compositional bias: basic residues; that stretch reads HKSRRKKKRRKLCRYHPGK. Residues 604 to 666 are compositionally biased toward basic and acidic residues; that stretch reads SSKEPEGSGK…ASTHLGEKET (63 aa). Composition is skewed to polar residues over residues 667-687 and 732-756; these read MNTT…NCGG and LASQ…SLTN. Residues 800–811 show a composition bias toward basic residues; the sequence is PKKKRRRKRSRL. The span at 891 to 944 shows a compositional bias: polar residues; that stretch reads TETTPCDSSQTSNDLATPVNVTRDPSNSTTDNTLLEHNQRSQTTNSNEKQTPFK.

This chain is Zinc finger protein 804A (Znf804a), found in Mus musculus (Mouse).